A 76-amino-acid chain; its full sequence is cAMP-dependent protein kinase inhibitor alpha (76 aa).

Thr2 carries the post-translational modification N-acetylthreonine. The tract at residues 49–76 (KTEGEEDAQRNSTEQSGEAQGEAAKSES) is disordered.

It belongs to the PKI family.

In terms of biological role, extremely potent competitive inhibitor of cAMP-dependent protein kinase activity, this protein interacts with the catalytic subunit of the enzyme after the cAMP-induced dissociation of its regulatory chains. The sequence is that of cAMP-dependent protein kinase inhibitor alpha (PKIA) from Bos taurus (Bovine).